The sequence spans 418 residues: CinA-like protein (418 aa).

It belongs to the CinA family.

The chain is CinA-like protein from Leptospira borgpetersenii serovar Hardjo-bovis (strain L550).